The sequence spans 175 residues: UPF0178 protein GOX1710 (175 aa).

The protein belongs to the UPF0178 family.

The chain is UPF0178 protein GOX1710 from Gluconobacter oxydans (strain 621H) (Gluconobacter suboxydans).